A 765-amino-acid chain; its full sequence is Probable ATP-dependent RNA helicase DDX27 (765 aa).

Phosphoserine occurs at positions 23, 25, and 48. The span at 43-63 (LGKNRSADFNPDFVFTEKEGT) shows a compositional bias: acidic residues. Disordered regions lie at residues 43-83 (LGKN…KRAA) and 111-179 (KEKE…FFED). Positions 55–57 (FVF) match the Required for interaction with the PEBOW complex motif. Residues 129–156 (ENDEEGSEDEASETDYSSADENILTKAD) are compositionally biased toward basic and acidic residues. Phosphoserine occurs at positions 135 and 146. Residues 157 to 172 (TLKVKDRKKKKKKGQE) show a composition bias toward acidic residues. Positions 164-169 (KKKKKK) match the Nuclear localization signal motif. Residues 187–215 (LSFQDMNLSRPLLKAITAMGFKQPTPIQK) carry the Q motif motif. In terms of domain architecture, Helicase ATP-binding spans 218-392 (IPVGLLGKDI…SVSLKNPVRI (175 aa)). ATP is bound at residue 231 to 238 (AATGTGKT). A DEAD box motif is present at residues 340–343 (DEAD). The 147-residue stretch at 426–572 (LLTRTFTDHV…DVILKFRDKI (147 aa)) folds into the Helicase C-terminal domain. The span at 716–725 (VFDEELTNTS) shows a compositional bias: basic residues.

Belongs to the DEAD box helicase family. DDX27/DRS1 subfamily. As to quaternary structure, associates with PeBoW complex, composed of BOP1, PES1 and WDR12. Interacts directly with BOP1 and PES1.

It is found in the nucleus. It localises to the nucleolus. Its subcellular location is the chromosome. It catalyses the reaction ATP + H2O = ADP + phosphate + H(+). Probable ATP-dependent RNA helicase. Component of the nucleolar ribosomal RNA (rRNA) processing machinery that regulates 3' end formation of ribosomal 47S rRNA. This is Probable ATP-dependent RNA helicase DDX27 (DDX27) from Homo sapiens (Human).